The following is a 450-amino-acid chain: Guanine deaminase (450 aa).

Residues His88 and His90 each contribute to the Zn(2+) site. Substrate is bound by residues 90 to 93 (HAPQ), 218 to 219 (RF), 245 to 248 (HLSE), and Asp335. Residues His245 and Asp335 each contribute to the Zn(2+) site.

This sequence belongs to the metallo-dependent hydrolases superfamily. ATZ/TRZ family. Zn(2+) serves as cofactor.

It catalyses the reaction guanine + H2O + H(+) = xanthine + NH4(+). It participates in purine metabolism; guanine degradation; xanthine from guanine: step 1/1. Catalyzes the hydrolytic deamination of guanine, producing xanthine and ammonia. This chain is Guanine deaminase (guaD), found in Dictyostelium discoideum (Social amoeba).